A 188-amino-acid polypeptide reads, in one-letter code: V-type proton ATPase subunit E (188 aa).

This sequence belongs to the V-ATPase E subunit family.

Produces ATP from ADP in the presence of a proton gradient across the membrane. The protein is V-type proton ATPase subunit E of Dictyoglomus turgidum (strain DSM 6724 / Z-1310).